A 272-amino-acid polypeptide reads, in one-letter code: uncharacterized protein (272 aa).

NAD(+) contacts are provided by residues 12 to 34, 39 to 40, 77 to 78, and asparagine 104; these read FITG…DGAN, DI, and DV. Serine 153 serves as a coordination point for substrate. The active-site Proton acceptor is tyrosine 170. NAD(+) is bound by residues lysine 174 and 203-205; that span reads VDT.

Belongs to the short-chain dehydrogenases/reductases (SDR) family.

This is an uncharacterized protein from Mycobacterium tuberculosis (strain CDC 1551 / Oshkosh).